The sequence spans 436 residues: Xylose isomerase (436 aa).

Residues histidine 100 and aspartate 103 contribute to the active site. Residues glutamate 231, glutamate 267, histidine 270, aspartate 295, aspartate 306, aspartate 308, and aspartate 338 each contribute to the Mg(2+) site.

This sequence belongs to the xylose isomerase family. In terms of assembly, homotetramer. Requires Mg(2+) as cofactor.

It is found in the cytoplasm. It carries out the reaction alpha-D-xylose = alpha-D-xylulofuranose. The sequence is that of Xylose isomerase from Rhizobium johnstonii (strain DSM 114642 / LMG 32736 / 3841) (Rhizobium leguminosarum bv. viciae).